The sequence spans 122 residues: uncharacterized protein (122 aa).

This is an uncharacterized protein from Aquifex aeolicus (strain VF5).